A 377-amino-acid polypeptide reads, in one-letter code: RNA polymerase sigma factor SigA (377 aa).

The interval 72 to 92 (EVSNLRQGEDHDGNDNDDFNF) is disordered. The interval 144 to 214 (LAEANLRLVV…TRAIADQART (71 aa)) is sigma-70 factor domain-2. The Interaction with polymerase core subunit RpoC signature appears at 168–171 (DLIQ). The tract at residues 223-299 (ETINKLIRVS…DQEALTPADA (77 aa)) is sigma-70 factor domain-3. The interval 312-365 (VLDTLTEREENVLRLRFGLDDGRTRTLEEVGKVFGVTRERIRQIEAKALRKLRH) is sigma-70 factor domain-4. The segment at residues 338–357 (LEEVGKVFGVTRERIRQIEA) is a DNA-binding region (H-T-H motif).

This sequence belongs to the sigma-70 factor family. RpoD/SigA subfamily. As to quaternary structure, interacts transiently with the RNA polymerase catalytic core.

The protein localises to the cytoplasm. Its function is as follows. Sigma factors are initiation factors that promote the attachment of RNA polymerase to specific initiation sites and are then released. This sigma factor is the primary sigma factor during exponential growth. In Bacillus sp, this protein is RNA polymerase sigma factor SigA.